A 404-amino-acid polypeptide reads, in one-letter code: MLIPCWDSAGQIHHLEGFPTSFKDWSRGEELSAQRREFLSAVEKVTPSSISSTRDLAVDMNLTLEVTLDDGQVLVVRQCYPSQNDDVEELWRTSKFESEVNLMQWLEQNSRIPVPSIHSVMRRGTDSPAHFIIMSKLPGQVLMNSHSLLSSLAKVFALSHLTVRNTVLELFRLDVPQRIGTTIPSNPGDGLDVRPKIGKQYSLSADRVFDTLEEYMRHLFSLKRKSKSIGDGDTDKARAYSTLTTLEDLVNVHLKSLTSPSLRRCVLMHDDLHDANILVDIHGNITGVLDWEFHSIQPAVLAVGYPAWLSYDDTNDPRFASSSVWWVVGRQESIELRRQYAMIVKVKDLEYYEALVAGLFLRSVVNWLIDEHADPGCLRLRGWMISEEALGESLTQPDQIVPAK.

Functionally, part of the gene cluster that mediates the biosynthesis of clavilactone A, a meroterpenoid that features a unique benzo-fused ten-membered carbocyclic ring unit with an alpha,beta-epoxy-gamma-lactone moiety, forming an intriguing 10/5/3 tricyclic nested skeleton. ClaR, ClaS and ClaT are sufficient to produce clavilactone A and the function of claY, if any, has still to be identified. The biosynthesis begins with the prenyltransferase claS that transfers geranyl pyrophosphate (GPP) to hydroquinone to produces geranylhydroquinon. The cytochrome P450 monooxygenase claR then catalyzes the diradical coupling reaction between the intramolecular hydroquinone and allyl moieties to form the benzo-fused ten-membered carbocyclic ring unit of wigantol. Finally the cytochrome P450 monooxygenase claT exquisitely and stereoselectively assembles the alpha,beta-epoxy-gamma-lactone moiety, producing clavilactone A via arnebinol A. The polypeptide is Clavilactone A biosynthesis cluster protein Y (Ampulloclitocybe clavipes (Club foot)).